Here is a 20-residue protein sequence, read N- to C-terminus: Apidaecin 1+ (20 aa).

Positions 1 to 20 are disordered; the sequence is GKPNRPRPAPIQPRPPHPRL.

It belongs to the apidaecin family.

It is found in the secreted. Its function is as follows. Antimicrobial peptide active against many Gram-negative enterobacterial and plant-associated bacterial species. Not active against other bacterial species like H.pylori, P.mirabilis, B.pertussis or N.gonorrhoeae. In terms of biological role, among others, also active against C.jejuni and L.pneumophila but not against Y.enterocolitica. Functionally, among others, also active against Y.enterocolitica butnot against L.pneumophila and C.jejuni. This is Apidaecin 1+ from Pimpla disparis (Parasitic wasp).